The primary structure comprises 291 residues: MAYVSMKQMLETGVHFGHQTRRWNPKMRPYIFGARNGIHIIDLQQTVKLYRAAHDKIVETVAAGGSVLFVGTKRQAQEAIATEATRAGQYYVANRWMGGTLTNFSTIQKSIERLNRLETMFSDGSVNRYQKKEILTLNREMDKLELTLGGIKNMERLPQLIFIIDPHRENIAVKEGRKLGIPIMAVTDTNCDPDLIDYIIPGNDDAIRAIKLFVTAMADACIEGEALQKDTKNKNLEEELKQIATAECNKESTSIEQELIIASEQTETKENNIEESVSEVVITNESELITE.

It belongs to the universal ribosomal protein uS2 family.

In Lawsonia intracellularis (strain PHE/MN1-00), this protein is Small ribosomal subunit protein uS2.